The following is a 428-amino-acid chain: Adenylosuccinate synthetase (428 aa).

Residues 12–18 (GDEGKGK) and 40–42 (GHT) each bind GTP. Asp13 acts as the Proton acceptor in catalysis. Asp13 and Gly40 together coordinate Mg(2+). Residues 13 to 16 (DEGK), 38 to 41 (NAGH), Thr130, Arg144, Gln225, Thr240, and Arg304 contribute to the IMP site. Catalysis depends on His41, which acts as the Proton donor. 300–306 (VTTGRAR) provides a ligand contact to substrate. GTP contacts are provided by residues Arg306, 332-334 (KID), and 414-416 (SVG).

Belongs to the adenylosuccinate synthetase family. As to quaternary structure, homodimer. Mg(2+) is required as a cofactor.

The protein localises to the cytoplasm. It catalyses the reaction IMP + L-aspartate + GTP = N(6)-(1,2-dicarboxyethyl)-AMP + GDP + phosphate + 2 H(+). The protein operates within purine metabolism; AMP biosynthesis via de novo pathway; AMP from IMP: step 1/2. In terms of biological role, plays an important role in the de novo pathway of purine nucleotide biosynthesis. Catalyzes the first committed step in the biosynthesis of AMP from IMP. The sequence is that of Adenylosuccinate synthetase from Clostridium botulinum (strain 657 / Type Ba4).